We begin with the raw amino-acid sequence, 291 residues long: Inositol-1-monophosphatase (291 aa).

Positions 83, 104, 106, and 107 each coordinate Mg(2+). Glu83 contacts substrate. Substrate-binding positions include 106–109, Arg206, and Asp235; that span reads IDGT. Asp235 lines the Mg(2+) pocket.

This sequence belongs to the inositol monophosphatase superfamily. It depends on Mg(2+) as a cofactor.

It catalyses the reaction a myo-inositol phosphate + H2O = myo-inositol + phosphate. In Mycobacterium leprae (strain TN), this protein is Inositol-1-monophosphatase (suhB).